Consider the following 274-residue polypeptide: Exosome complex component Rrp42 (274 aa).

It belongs to the RNase PH family. Rrp42 subfamily. As to quaternary structure, component of the archaeal exosome complex. Forms a hexameric ring-like arrangement composed of 3 Rrp41-Rrp42 heterodimers. The hexameric ring associates with a trimer of Rrp4 and/or Csl4 subunits.

It is found in the cytoplasm. Functionally, non-catalytic component of the exosome, which is a complex involved in RNA degradation. Contributes to the structuring of the Rrp41 active site. The protein is Exosome complex component Rrp42 of Pyrococcus abyssi (strain GE5 / Orsay).